Consider the following 901-residue polypeptide: Bifunctional protein STORR (901 aa).

The helical transmembrane segment at 12 to 32 (TSSVVALLLALVSILSSVVVL) threads the bilayer. Heme is bound at residue C513.

This sequence in the N-terminal section; belongs to the cytochrome P450 family. It in the C-terminal section; belongs to the aldo/keto reductase family. Heme is required as a cofactor.

The protein localises to the membrane. The catalysed reaction is (R)-reticuline + NADP(+) = 1,2-dehydroreticuline + NADPH + H(+). It catalyses the reaction (S)-reticuline + reduced [NADPH--hemoprotein reductase] + O2 = 1,2-dehydroreticuline + oxidized [NADPH--hemoprotein reductase] + 2 H2O + H(+). Its pathway is alkaloid biosynthesis; morphine biosynthesis. In terms of biological role, bifunctional protein involved in the biosynthesis of morphinan-type benzylisoquinoline alkaloids. Required for the isomerization of (S)- to (R)-reticuline. The cytochrome P450 module is responsible for the conversion of (S)-reticuline to 1,2-dehydroreticuline while the oxidoreductase module converts 1,2-dehydroreticuline to (R)-reticuline. The sequence is that of Bifunctional protein STORR from Papaver somniferum (Opium poppy).